A 221-amino-acid polypeptide reads, in one-letter code: Casparian strip membrane protein 2 (221 aa).

The disordered stretch occupies residues 1–21 (MEKSEATTIEIGETSRESKGK). The Cytoplasmic portion of the chain corresponds to 1-41 (MEKSEATTIEIGETSRESKGKTPLLAEVEQTARTAGSYRRG). The helical transmembrane segment at 42–62 (VAIFDLILRVSAATSALAATI) threads the bilayer. Topologically, residues 63 to 89 (TMGTTEQTLPFFTQFFQFQASYDDLPA) are extracellular. A helical membrane pass occupies residues 90 to 110 (FTFFVIALSIVTGYLVLSVPF). Residues 111–131 (SVVCIAQPLAAVPRLLLIVCD) lie on the Cytoplasmic side of the membrane. The chain crosses the membrane as a helical span at residues 132–152 (TLTVTLATAAASSSAAIVYLA). The Extracellular portion of the chain corresponds to 153–221 (HNGNADANWL…HYWDRRWCEI (69 aa)).

It belongs to the Casparian strip membrane proteins (CASP) family. In terms of assembly, homodimer and heterodimers.

The protein resides in the cell membrane. Its function is as follows. Regulates membrane-cell wall junctions and localized cell wall deposition. Required for establishment of the Casparian strip membrane domain (CSD) and the subsequent formation of Casparian strips, a cell wall modification of the root endodermis that determines an apoplastic barrier between the intraorganismal apoplasm and the extraorganismal apoplasm and prevents lateral diffusion. The chain is Casparian strip membrane protein 2 from Erythranthe guttata (Yellow monkey flower).